The chain runs to 123 residues: Small ribosomal subunit protein uS12c (123 aa).

It belongs to the universal ribosomal protein uS12 family. As to quaternary structure, part of the 30S ribosomal subunit.

The protein localises to the plastid. It localises to the chloroplast. Its function is as follows. With S4 and S5 plays an important role in translational accuracy. Located at the interface of the 30S and 50S subunits. In Anthoceros angustus (Hornwort), this protein is Small ribosomal subunit protein uS12c (rps12).